A 48-amino-acid chain; its full sequence is Glycine-rich RNA-binding protein 2 (48 aa).

The polypeptide is Glycine-rich RNA-binding protein 2 (Populus euphratica (Euphrates poplar)).